The chain runs to 122 residues: Large ribosomal subunit protein uL18 (122 aa).

This sequence belongs to the universal ribosomal protein uL18 family. In terms of assembly, part of the 50S ribosomal subunit; part of the 5S rRNA/L5/L18/L25 subcomplex. Contacts the 5S and 23S rRNAs.

Functionally, this is one of the proteins that bind and probably mediate the attachment of the 5S RNA into the large ribosomal subunit, where it forms part of the central protuberance. The chain is Large ribosomal subunit protein uL18 from Kosmotoga olearia (strain ATCC BAA-1733 / DSM 21960 / TBF 19.5.1).